A 293-amino-acid polypeptide reads, in one-letter code: MTKLPSDASAIKRVEANTSPEQVIELLKQDGVVVLKDFLDQATVQSFREEIKPAIDDFEGGPNFNPDGVKVDIGRGTKHVANLTAISKTYRHDILNNKWMHSILEPLFRPHFGDYWMNRGSVLHIEPGEPAQNLHRDDILYRVTKLRQPGDPDLMINILIAVTEFRDDNGATRFVPGSHVWDDTRGVPTPDQASSAALRPGDALLFVGSLWHGAGSNQSDAFRQGLLLCIHPCHFTPMESHLHVPRTIVESMTPQAQKMIGWRSGITQHDVPIWLAGDHKMEETMGLRSQEVQ.

3 residues coordinate Fe cation: histidine 135, aspartate 137, and histidine 212.

This sequence belongs to the PhyH family. In terms of assembly, homodimer. Requires Fe cation as cofactor.

The enzyme catalyses chrodrimanin C + 2-oxoglutarate + O2 = verruculide A + succinate + CO2 + H2O. It catalyses the reaction chrodrimanin H + 2-oxoglutarate + O2 = chrodrimanin E + succinate + CO2 + H2O. It participates in secondary metabolite biosynthesis; terpenoid biosynthesis. In terms of biological role, dioxygenase; part of the gene cluster that mediates the biosynthesis of chrodrimanin B, a meroterpenoid that acts as a potent blocker of insect GABA-gated chloride channels. The first step of the pathway is the biosynthesis of 6-hydroxymellein by the polyketide synthase cdmE. The prenyltransferase cdmH acts as a 6-hydroxymellein 5-farnesyltransferase and produces the hydrophobic metabolite verruculide C. The FAD-dependent monooxygenase cdmI further converts verruculide C into verruculide B. The terpene cyclase cdmG then produced the pentacyclic molecule 3-hydroxypentacecilide A, the backbone structure of chrodrimanin B, via folding the farnesyl moiety of the substrate into the chair-boat conformation. The short-chain dehydrogenase/reductase cdmF functions as the 3-OH dehydrogenase that oxidizes the C-3 hydroxyl group of 3-hydroxypentacecilide A and produces chrodrimanin C, the dehydrogenated product of 3-hydroxypentacecilide A. The cytochrome P450 monooxygenase cdmJ then accepts both 3-hydroxypentacecilide A and chrodrimanin C and functions as a C-7-beta-hydroxylase to produce respectively chrodrimanin H and chrodrimanin F. The dioxygenase cdmA accepts chrodrimanin H to afford chrodrimanin E, which is further transformed to chrodrimanin A by the dioxygenase cdmD. CdmA can also accept chrodrimanin C as substrate to convert it into verruculide A, which is further converted into chrodrimanin T by cdmD. The last step of the biosynthesis is proposed to be performed by the acetyltransferase cdmC which acetylates chrodrimanin A to yield chrodrimanin B. The pathway may also lead to the production of additional shunt products, including chrodrimanins T and U. In Talaromyces verruculosus (Penicillium verruculosum), this protein is Dioxygenase cdmA.